Here is a 485-residue protein sequence, read N- to C-terminus: Glutamyl-tRNA(Gln) amidotransferase subunit A (485 aa).

Residues lysine 74 and serine 149 each act as charge relay system in the active site. The active-site Acyl-ester intermediate is the serine 173.

The protein belongs to the amidase family. GatA subfamily. Heterotrimer of A, B and C subunits.

The enzyme catalyses L-glutamyl-tRNA(Gln) + L-glutamine + ATP + H2O = L-glutaminyl-tRNA(Gln) + L-glutamate + ADP + phosphate + H(+). Allows the formation of correctly charged Gln-tRNA(Gln) through the transamidation of misacylated Glu-tRNA(Gln) in organisms which lack glutaminyl-tRNA synthetase. The reaction takes place in the presence of glutamine and ATP through an activated gamma-phospho-Glu-tRNA(Gln). The sequence is that of Glutamyl-tRNA(Gln) amidotransferase subunit A from Janthinobacterium sp. (strain Marseille) (Minibacterium massiliensis).